The primary structure comprises 127 residues: Large ribosomal subunit protein bL12 (127 aa).

This sequence belongs to the bacterial ribosomal protein bL12 family. As to quaternary structure, homodimer. Part of the ribosomal stalk of the 50S ribosomal subunit. Forms a multimeric L10(L12)X complex, where L10 forms an elongated spine to which 2 to 4 L12 dimers bind in a sequential fashion. Binds GTP-bound translation factors.

Forms part of the ribosomal stalk which helps the ribosome interact with GTP-bound translation factors. Is thus essential for accurate translation. This is Large ribosomal subunit protein bL12 from Phytoplasma mali (strain AT).